We begin with the raw amino-acid sequence, 143 residues long: Transcriptional regulatory protein RosR (143 aa).

Residues 79-97 (CLECGGNFKSLKRHLMTHH) form a C2H3-type zinc finger.

Belongs to the ros/MucR family.

The protein is Transcriptional regulatory protein RosR (rosR) of Rhizobium etli (strain ATCC 51251 / DSM 11541 / JCM 21823 / NBRC 15573 / CFN 42).